Consider the following 182-residue polypeptide: Large ribosomal subunit protein uL10 (182 aa).

This sequence belongs to the universal ribosomal protein uL10 family. Part of the ribosomal stalk of the 50S ribosomal subunit. The N-terminus interacts with L11 and the large rRNA to form the base of the stalk. The C-terminus forms an elongated spine to which L12 dimers bind in a sequential fashion forming a multimeric L10(L12)X complex.

Forms part of the ribosomal stalk, playing a central role in the interaction of the ribosome with GTP-bound translation factors. This Herminiimonas arsenicoxydans protein is Large ribosomal subunit protein uL10.